Consider the following 588-residue polypeptide: Lysine--tRNA ligase (588 aa).

The span at 1–10 (MDSSVSTEPL) shows a compositional bias: polar residues. The segment at 1-54 (MDSSVSTEPLSKNALKREKKAKEKEQLEQEKKAAAVAKRQMEQHNLPENDDLDP) is disordered. Residues 20 to 47 (KAKEKEQLEQEKKAAAVAKRQMEQHNLP) are compositionally biased toward basic and acidic residues.

It belongs to the class-II aminoacyl-tRNA synthetase family.

The protein resides in the cytoplasm. The enzyme catalyses tRNA(Lys) + L-lysine + ATP = L-lysyl-tRNA(Lys) + AMP + diphosphate. The protein is Lysine--tRNA ligase (LYSRS) of Solanum lycopersicum (Tomato).